The primary structure comprises 138 residues: Basic phospholipase A2 chain HDP-2P (138 aa).

A signal peptide spans 1 to 16 (MRILWIVAVCLIGVEG). 7 cysteine pairs are disulfide-bonded: C42/C131, C44/C60, C59/C111, C65/C138, C66/C104, C73/C97, and C91/C102. Ca(2+) contacts are provided by Y43, G45, and G47. Residue H63 is part of the active site. D64 lines the Ca(2+) pocket. Residue D105 is part of the active site.

Heterodimer of an acidic and a basic chain; non-covalently linked. The toxic basic protein has phospholipase A2 activity (chain HDP-2P) and the non-toxic acidic protein functions as its inhibitor (chain HPD-1I (AC A4VBF0)). Ca(2+) is required as a cofactor. Expressed by the venom gland.

The protein resides in the secreted. It catalyses the reaction a 1,2-diacyl-sn-glycero-3-phosphocholine + H2O = a 1-acyl-sn-glycero-3-phosphocholine + a fatty acid + H(+). With respect to regulation, enzymatic activity and neurotoxicity are inhibited by Triton X-100. Triton X-100 has been determined to be located in the center of the hydrophobic channel of the enzyme. Functionally, monomer: snake venom phospholipase A2 (PLA2) that affects neuromuscular transmission presynaptically. It has catalytic activity, anticoagulant activity and weakly inhibits ADP-induced platelet aggregation. PLA2 catalyzes the calcium-dependent hydrolysis of the 2-acyl groups in 3-sn-phosphoglycerides. Its function is as follows. Heterodimer: shows the same activities as the monomer, but with a lower potency. The protein is Basic phospholipase A2 chain HDP-2P of Vipera nikolskii (Nikolsky's adder).